The sequence spans 851 residues: Probable disease resistance protein At1g15890 (851 aa).

One can recognise an NB-ARC domain in the interval 139–441 (AEKIPAPKVE…CEGFIDGNED (303 aa)). 181 to 188 (GMGGVGKT) lines the ATP pocket. LRR repeat units follow at residues 514–535 (SLRR…SNSP), 536–557 (NLST…FFRF), 560–582 (ALVV…ISKL), 584–605 (SLQY…FKEL), and 607–629 (KLIH…ATSL).

It belongs to the disease resistance NB-LRR family.

Its function is as follows. Probable disease resistance protein. The chain is Probable disease resistance protein At1g15890 from Arabidopsis thaliana (Mouse-ear cress).